A 454-amino-acid polypeptide reads, in one-letter code: Tryptophanase (454 aa).

At Lys-256 the chain carries N6-(pyridoxal phosphate)lysine.

It belongs to the beta-eliminating lyase family. Homotetramer. Requires pyridoxal 5'-phosphate as cofactor.

The catalysed reaction is L-tryptophan + H2O = indole + pyruvate + NH4(+). It functions in the pathway amino-acid degradation; L-tryptophan degradation via pyruvate pathway; indole and pyruvate from L-tryptophan: step 1/1. In Rhodobacter capsulatus (Rhodopseudomonas capsulata), this protein is Tryptophanase (tnaA).